The chain runs to 159 residues: Phosphopantetheine adenylyltransferase (159 aa).

S9 provides a ligand contact to substrate. ATP-binding positions include 9-10 and H17; that span reads SF. Substrate contacts are provided by K41, I75, and K89. Residues 90–92, E100, and 124–130 contribute to the ATP site; these read GLR and LEHISSS.

It belongs to the bacterial CoaD family. As to quaternary structure, homohexamer. Mg(2+) is required as a cofactor.

The protein localises to the cytoplasm. The enzyme catalyses (R)-4'-phosphopantetheine + ATP + H(+) = 3'-dephospho-CoA + diphosphate. The protein operates within cofactor biosynthesis; coenzyme A biosynthesis; CoA from (R)-pantothenate: step 4/5. Functionally, reversibly transfers an adenylyl group from ATP to 4'-phosphopantetheine, yielding dephospho-CoA (dPCoA) and pyrophosphate. The protein is Phosphopantetheine adenylyltransferase of Bifidobacterium animalis subsp. lactis (strain AD011).